Reading from the N-terminus, the 122-residue chain is Lycotoxin-Pa4a (122 aa).

A signal peptide spans Met1–Ser20. Positions Glu21–Arg47 are excised as a propeptide. Intrachain disulfides connect Cys58-Cys73, Cys65-Cys82, Cys72-Cys100, and Cys84-Cys98.

Belongs to the neurotoxin 19 (CSTX) family. As to expression, expressed by the venom gland.

Its subcellular location is the secreted. The protein localises to the target cell membrane. Functionally, potent antibacterial peptide with anti-inflammatory properties. Inhibits both Gram-negative and Gram-positive bacteria by disrupting both the outer membrane and the cytosolic membrane of bacteria. Also downregulates the expression of pro-inflammatory mediators (cyclooxygenase-2 (PTGS2/COX2), nitric oxide-induced synthase (NOS2), IL-1 beta (IL1B), TNF-alpha (TNF)) and upregulates the level of anti-inflammatory cytokine (IL10) by inactivating mitogen-activated protein kinase signaling in a lipopolysaccharide-stimulated murine macrophage cell line. The sequence is that of Lycotoxin-Pa4a from Pardosa astrigera (Wolf spider).